The sequence spans 87 residues: Small ribosomal subunit protein bS20 (87 aa).

The protein belongs to the bacterial ribosomal protein bS20 family.

Binds directly to 16S ribosomal RNA. The polypeptide is Small ribosomal subunit protein bS20 (Beijerinckia indica subsp. indica (strain ATCC 9039 / DSM 1715 / NCIMB 8712)).